Reading from the N-terminus, the 199-residue chain is Protein MM_0484 (199 aa).

In terms of domain architecture, AMMECR1 spans 5-196 (TEGRAAVKLA…EKEPDGEVIE (192 aa)).

This Methanosarcina mazei (strain ATCC BAA-159 / DSM 3647 / Goe1 / Go1 / JCM 11833 / OCM 88) (Methanosarcina frisia) protein is Protein MM_0484.